Consider the following 261-residue polypeptide: Glutamate racemase (261 aa).

Substrate-binding positions include 7-8 (DS) and 39-40 (YG). Cys-71 functions as the Proton donor/acceptor in the catalytic mechanism. Substrate is bound at residue 72–73 (NT). Residue Cys-184 is the Proton donor/acceptor of the active site. 185–186 (TH) provides a ligand contact to substrate.

The protein belongs to the aspartate/glutamate racemases family.

The enzyme catalyses L-glutamate = D-glutamate. Its pathway is cell wall biogenesis; peptidoglycan biosynthesis. Functionally, provides the (R)-glutamate required for cell wall biosynthesis. The polypeptide is Glutamate racemase (Aliarcobacter butzleri (strain RM4018) (Arcobacter butzleri)).